The primary structure comprises 303 residues: Propanal dehydrogenase (CoA-propanoylating) (303 aa).

12–15 (SGNI) serves as a coordination point for NAD(+). The active-site Acyl-thioester intermediate is Cys-127. NAD(+) contacts are provided by residues 158 to 166 (SAGPGTRAN) and Asn-277.

It belongs to the acetaldehyde dehydrogenase family. In terms of assembly, monomer. Forms a heterotetramer composed of two aldolase (HsaF) and two dehydrogenase (HsaG) subunits.

The catalysed reaction is propanal + NAD(+) + CoA = propanoyl-CoA + NADH + H(+). The enzyme catalyses acetaldehyde + NAD(+) + CoA = acetyl-CoA + NADH + H(+). Functionally, involved in cholesterol degradation. Catalyzes the conversion of propanal to propanoyl-CoA, using NAD(+) and coenzyme A. The polypeptide is Propanal dehydrogenase (CoA-propanoylating) (Mycobacterium bovis (strain ATCC BAA-935 / AF2122/97)).